A 303-amino-acid chain; its full sequence is Quinolinate synthase (303 aa).

2 residues coordinate iminosuccinate: His25 and Ser42. [4Fe-4S] cluster is bound at residue Cys87. Iminosuccinate contacts are provided by residues 113 to 115 (YVN) and Ser130. Residue Cys173 coordinates [4Fe-4S] cluster. Iminosuccinate is bound by residues 199–201 (HPE) and Thr216. Position 261 (Cys261) interacts with [4Fe-4S] cluster.

The protein belongs to the quinolinate synthase family. Type 2 subfamily. The cofactor is [4Fe-4S] cluster.

The protein resides in the cytoplasm. It carries out the reaction iminosuccinate + dihydroxyacetone phosphate = quinolinate + phosphate + 2 H2O + H(+). Its pathway is cofactor biosynthesis; NAD(+) biosynthesis; quinolinate from iminoaspartate: step 1/1. Functionally, catalyzes the condensation of iminoaspartate with dihydroxyacetone phosphate to form quinolinate. This is Quinolinate synthase from Desulforudis audaxviator (strain MP104C).